The chain runs to 62 residues: Small ribosomal subunit protein eS27 (62 aa).

Positions 17, 20, 36, and 39 each coordinate Zn(2+). A C4-type zinc finger spans residues 17 to 39 (CNDCENEQIIFGSASRKITCVVC).

Belongs to the eukaryotic ribosomal protein eS27 family. Part of the 30S ribosomal subunit. It depends on Zn(2+) as a cofactor.

This chain is Small ribosomal subunit protein eS27, found in Methanosarcina mazei (strain ATCC BAA-159 / DSM 3647 / Goe1 / Go1 / JCM 11833 / OCM 88) (Methanosarcina frisia).